A 430-amino-acid polypeptide reads, in one-letter code: Asparagine--tRNA ligase (430 aa).

Belongs to the class-II aminoacyl-tRNA synthetase family. As to quaternary structure, homodimer.

It localises to the cytoplasm. It catalyses the reaction tRNA(Asn) + L-asparagine + ATP = L-asparaginyl-tRNA(Asn) + AMP + diphosphate + H(+). The polypeptide is Asparagine--tRNA ligase (Pelotomaculum thermopropionicum (strain DSM 13744 / JCM 10971 / SI)).